A 147-amino-acid chain; its full sequence is MNWTAATCWALLLAAAFLCDSCSAKGGRGGARGSARGVRGGARGASRVRVRPAPRYGSSLRVAAAGAAAGAAAGVAAGLATGSGWRRTSGPGELGLEDDENGAMGGNGTDRGVYSYWAWTSGSGSVHSPRICLLLGGTLGALELLRP.

The first 24 residues, 1–24 (MNWTAATCWALLLAAAFLCDSCSA), serve as a signal peptide directing secretion. Residues 26–43 (GGRGGARGSARGVRGGAR) are compositionally biased toward gly residues. The tract at residues 26 to 45 (GGRGGARGSARGVRGGARGA) is disordered. A glycan (N-linked (GlcNAc...) asparagine) is linked at N107. G122 carries GPI-anchor amidated glycine lipidation. Residues 123-147 (SGSVHSPRICLLLGGTLGALELLRP) constitute a propeptide, removed in mature form.

The protein belongs to the SPRN family. In terms of processing, N-glycosylated. Mainly expressed in brain (at protein level). In brain, it is highly expressed in the hippocampus and cerebellum and is also expressed at lower level in other areas of the brain including the cerebral cortex, the thalamus and the medulla. In hippocampus and cerebellum it is highly expressed in the cell bodies of pyramidal cells and Purkinje cells, respectively.

Its subcellular location is the cell membrane. In terms of biological role, prion-like protein that has PrP(C)-like neuroprotective activity. May act as a modulator for the biological actions of normal and abnormal PrP. The sequence is that of Shadow of prion protein (Sprn) from Mus musculus (Mouse).